We begin with the raw amino-acid sequence, 380 residues long: Cytochrome b (380 aa).

Helical transmembrane passes span 33–53 (FGSL…FLAM), 77–98 (WLIR…YFHI), 113–133 (WNIG…GYVL), and 178–198 (FFAF…LHLL). Heme b-binding residues include His-83 and His-97. The heme b site is built by His-182 and His-196. An a ubiquinone-binding site is contributed by His-201. The next 4 helical transmembrane spans lie at 226-246 (YKDL…ALFS), 288-308 (LGGV…PFLH), 320-340 (VSQF…WIGG), and 347-367 (FIII…VFFP).

Belongs to the cytochrome b family. As to quaternary structure, the cytochrome bc1 complex contains 3 respiratory subunits (MT-CYB, CYC1 and UQCRFS1), 2 core proteins (UQCRC1 and UQCRC2) and probably 6 low-molecular weight proteins. Heme b is required as a cofactor.

It localises to the mitochondrion inner membrane. Functionally, component of the ubiquinol-cytochrome c reductase complex (complex III or cytochrome b-c1 complex) that is part of the mitochondrial respiratory chain. The b-c1 complex mediates electron transfer from ubiquinol to cytochrome c. Contributes to the generation of a proton gradient across the mitochondrial membrane that is then used for ATP synthesis. This chain is Cytochrome b (mt-cyb), found in Sarda sarda (Atlantic bonito).